The sequence spans 530 residues: Cytochrome P450 78A6 (530 aa).

Residues 25–45 traverse the membrane as a helical segment; the sequence is LAFSLLAVTIIWLAISLFLWT. A heme-binding site is contributed by Cys474.

This sequence belongs to the cytochrome P450 family. Heme is required as a cofactor. In terms of tissue distribution, expressed in leaves, sepals, petals, stamens, carpels and developing ovules.

It localises to the membrane. In terms of biological role, plays a role in seed and fruit development. Functions probably in association with CYP78A9 in the regulation of seed growth. Acts maternally to promote seed growth. The chain is Cytochrome P450 78A6 (CYP78A6) from Arabidopsis thaliana (Mouse-ear cress).